We begin with the raw amino-acid sequence, 740 residues long: MENCYCIEPQWPADELLMKYQYISDFFIALAYFSIPLELIYFVKKSAVFPYRWVLVQFGAFIVLCGATHLINLWTFTMHSRTVAVVMTTAKVLTAVVSCATALMLVHIIPDLLSVKTRELFLKNKAAELDREMGLIRTQEETGRHVRMLTHEIRSTLDRHTILKTTLVELGRTLALEECALWMPTRTGLELQLSYTLHQQNPVGYTVPINLPVISQVFSSNRALKISPNSPVASLRPRAGRYVAGEVVAVRVPLLHLSNFQINDWPELSTKRYALMVLMLPSDSARQWRVHELELVEVVADQVAVALSHAAILEESMRARDLLMEQNVALDLARREAETAIRARNDFLAVMNHEMRTPMHAIIALSSLLQETELTPEQRLMVETILKSSNLLATLINDVLDLSRLEDGSLQLDIGTFNLHAVFKEVLNLIKPVTLVKKLSLTLHLGPDLPVFAVGDEKRLMQAILNVVGNAVKFSKEGSISISAIVAKSETFREIRVPDFHPVPSDSHFYLRVQVKDTGSGISPQDIPKLFTKFAQTTVGPRNSGGSGLGLAICKRFVNLMEGHIWLESEGLGKGCTATFIVKLGIADQSNESKLPYTSKIHENSIHTSFPGLKVLVMDDNGVSRSVTKGLLVHLGCEVTTAGSIEEFLRVVSQEHKVVFMDICTPGVDGYELAIRIREKFAKCHERPFMVVLTGNSDKVTKESCLRAGMDGLILKPVSIDKMRSVLSELIERRVLFETS.

The next 3 membrane-spanning stretches (helical) occupy residues 23 to 43, 54 to 74, and 92 to 112; these read ISDF…IYFV, VLVQ…INLW, and VLTA…IPDL. The Cu cation site is built by Cys65 and His69. Positions 158–307 constitute a GAF domain; the sequence is DRHTILKTTL…VVADQVAVAL (150 aa). Positions 350 to 588 constitute a Histidine kinase domain; that stretch reads VMNHEMRTPM…TFIVKLGIAD (239 aa). His353 carries the phosphohistidine; by autocatalysis modification. The region spanning 614–731 is the Response regulatory domain; sequence KVLVMDDNGV…KMRSVLSELI (118 aa). Asp662 carries the 4-aspartylphosphate modification.

Belongs to the ethylene receptor family. As to quaternary structure, homodimer; disulfide-linked. Cu cation serves as cofactor. In terms of processing, activation probably requires a transfer of a phosphate group between a His in the transmitter domain and an Asp of the receiver domain. In seeds and placenta.

It localises to the endoplasmic reticulum membrane. It catalyses the reaction ATP + protein L-histidine = ADP + protein N-phospho-L-histidine.. In terms of biological role, may act early in the ethylene signal transduction pathway, possibly as an ethylene receptor, or as a regulator of the pathway. This Cucumis melo var. cantalupensis (Netted muskmelon) protein is Ethylene receptor 1 (ETR1).